We begin with the raw amino-acid sequence, 329 residues long: D-alanine--D-alanine ligase (329 aa).

One can recognise an ATP-grasp domain in the interval 120 to 326 (KLWYDALDIP…FHEFLEDCIN (207 aa)). 150 to 205 (AFEKWGKVFVKAARQGSSVGCYSVAEKQAIAKAVNDAFGYSDQVLVEKAVKPRELE) is an ATP binding site. Residues D280, E293, and N295 each contribute to the Mg(2+) site.

It belongs to the D-alanine--D-alanine ligase family. Requires Mg(2+) as cofactor. Mn(2+) is required as a cofactor.

The protein localises to the cytoplasm. The catalysed reaction is 2 D-alanine + ATP = D-alanyl-D-alanine + ADP + phosphate + H(+). It participates in cell wall biogenesis; peptidoglycan biosynthesis. Cell wall formation. The sequence is that of D-alanine--D-alanine ligase from Vibrio parahaemolyticus serotype O3:K6 (strain RIMD 2210633).